Consider the following 208-residue polypeptide: Uracil phosphoribosyltransferase (208 aa).

Residues R78, R103, and 130 to 138 contribute to the 5-phospho-alpha-D-ribose 1-diphosphate site; that span reads DPMLATGGS. Uracil contacts are provided by residues I193 and 198 to 200; that span reads GDA. Residue D199 participates in 5-phospho-alpha-D-ribose 1-diphosphate binding.

The protein belongs to the UPRTase family. Requires Mg(2+) as cofactor.

The enzyme catalyses UMP + diphosphate = 5-phospho-alpha-D-ribose 1-diphosphate + uracil. The protein operates within pyrimidine metabolism; UMP biosynthesis via salvage pathway; UMP from uracil: step 1/1. Allosterically activated by GTP. Catalyzes the conversion of uracil and 5-phospho-alpha-D-ribose 1-diphosphate (PRPP) to UMP and diphosphate. The sequence is that of Uracil phosphoribosyltransferase from Haemophilus influenzae (strain 86-028NP).